Consider the following 463-residue polypeptide: Paraneoplastic antigen Ma3 (463 aa).

The interval 363 to 410 (VGAVPLPASGNSFDARPSQGYRRRRGRGQHRRGGVARAGSRGSRKRKR) is disordered. Residues 383–396 (YRRRRGRGQHRRGG) show a composition bias toward basic residues. A CCHC-type zinc finger spans residues 412–429 (TFCYSCGEDGHIRVQCIN). The interval 440 to 463 (KQAAVESGNGNWAWDKSHPKSKAK) is disordered.

The protein belongs to the PNMA family. Expressed at high levels in the brain and testis. Expressed at lower levels in the heart, trachea and kidney.

The protein resides in the nucleus. It localises to the nucleolus. The sequence is that of Paraneoplastic antigen Ma3 (PNMA3) from Homo sapiens (Human).